The primary structure comprises 408 residues: Multidrug resistance protein MdtG (408 aa).

The next 11 membrane-spanning stretches (helical) occupy residues leucine 16–phenylalanine 36, isoleucine 58–alanine 78, leucine 92–isoleucine 112, alanine 115–valine 135, threonine 146–alanine 166, proline 173–isoleucine 193, leucine 224–leucine 244, valine 256–proline 276, isoleucine 290–threonine 310, phenylalanine 319–asparagine 339, and alanine 378–leucine 398.

It belongs to the major facilitator superfamily. DHA1 family. MdtG (TC 2.A.1.2.20) subfamily.

It is found in the cell inner membrane. In terms of biological role, confers resistance to fosfomycin and deoxycholate. The chain is Multidrug resistance protein MdtG from Escherichia coli O6:K15:H31 (strain 536 / UPEC).